The chain runs to 188 residues: Sulfopyruvate decarboxylase subunit beta (188 aa).

It belongs to the TPP enzyme family. As to quaternary structure, heterododecamer composed of 6 subunits alpha and 6 subunits beta. Requires thiamine diphosphate as cofactor.

The catalysed reaction is 3-sulfopyruvate + H(+) = sulfoacetaldehyde + CO2. Its pathway is cofactor biosynthesis; coenzyme M biosynthesis; sulfoacetaldehyde from phosphoenolpyruvate and sulfite: step 4/4. Its activity is regulated as follows. Inhibited by oxygen when heated in air at 80 degrees Celsius. The enzyme is reactivated by addition of dithionite. Its function is as follows. Involved in the biosynthesis of the coenzyme M (2-mercaptoethanesulfonic acid). Catalyzes the decarboxylation of sulfopyruvate to sulfoacetaldehyde. The chain is Sulfopyruvate decarboxylase subunit beta from Methanocaldococcus jannaschii (strain ATCC 43067 / DSM 2661 / JAL-1 / JCM 10045 / NBRC 100440) (Methanococcus jannaschii).